The primary structure comprises 99 residues: ADAPTAFNQCKACHSIEAGKNGVGPSLSGAYGRKVGLAPNYKYSAAHLASGMTIDEAMLTNYLANPKATIPGNKMGASFGGLKKPEDVKAVIEYLKTVK.

4 residues coordinate heme c: C10, C13, H14, and M75.

Belongs to the cytochrome c family. Post-translationally, binds 1 heme c group covalently per subunit.

Cytochrome c2 is found mainly in purple, non-sulfur, photosynthetic bacteria where it functions as the electron donor to the oxidized bacteriochlorophyll in the photophosphorylation pathway. However, it may also have a role in the respiratory chain and is found in some non-photosynthetic bacteria. In Magnetospirillum fulvum (Rhodospirillum fulvum), this protein is Cytochrome c2 iso-1.